A 1781-amino-acid chain; its full sequence is Signal-induced proliferation-associated 1-like protein 3 (1781 aa).

Disordered regions lie at residues 45 to 166 (SMSQ…FLPL) and 239 to 332 (TELL…EASR). Low complexity predominate over residues 54 to 73 (PATATATATATTRPSPTTPA). The segment covering 87 to 97 (PPKREALREHS) has biased composition (basic and acidic residues). Ser-100 is subject to Phosphoserine. Residues 118 to 135 (RSIQNGQPPTSTPASSGS) are compositionally biased toward polar residues. The span at 137-146 (AFHRLSRRRS) shows a compositional bias: basic residues. Ser-146 carries the phosphoserine modification. Ser-401 bears the Phosphoserine mark. The region spanning 611–828 (LLKLDEQGLC…RTRQEYLKDL (218 aa)) is the Rap-GAP domain. One can recognise a PDZ domain in the interval 966–1042 (DMTLRRNGLG…VKVVIIPPFE (77 aa)). Disordered stretches follow at residues 1046–1112 (PRRG…SLSR), 1124–1221 (ESQP…QKPE), 1236–1565 (AGSS…GLEP), and 1583–1636 (TLPA…RLDP). Polar residues-rich tracts occupy residues 1080–1111 (APWQWSGPASHNSLPASKWATPTTPGHAQSLS) and 1157–1166 (PSGSFSTPGS). Over residues 1196–1210 (DGTSSGDSSSGGLTS) the composition is skewed to low complexity. Residues 1245–1261 (SRQDAAGKDSPNRHSKG) show a composition bias toward basic and acidic residues. Residues 1266–1281 (SSHSSSNTLSSNASSS) are compositionally biased toward low complexity. Polar residues predominate over residues 1304–1322 (GGSSDSGIDTTLYTSSPSC). Phosphoserine is present on Ser-1364. Residue Thr-1387 is modified to Phosphothreonine. Residues 1425–1441 (RPSQLAQPSPFQLSASV) are compositionally biased toward polar residues. An N6-acetyllysine modification is found at Lys-1448. A compositionally biased stretch (basic and acidic residues) spans 1509–1518 (TIEDDLKKLI). Positions 1532 to 1547 (GQSPQKGLQRTLSDES) are enriched in polar residues. 2 positions are modified to phosphoserine: Ser-1544 and Ser-1547. Over residues 1599–1609 (PGATPAAGSGF) the composition is skewed to low complexity. 2 positions are modified to phosphoserine: Ser-1619 and Ser-1622. Over residues 1625–1635 (DGRDRPLRRLD) the composition is skewed to basic and acidic residues. The residue at position 1677 (Ser-1677) is a Phosphoserine. Residues 1685-1712 (SPVHSHLSLERGPPTPRTTPTMSEEPPL) form a disordered region. Phosphothreonine is present on residues Thr-1699 and Thr-1703. A coiled-coil region spans residues 1720–1774 (QLEVMLKQLHTDLQKEKQDKVVLQSEVASLRQNNQRLQEESQAASEQLRKFAEIF).

The protein resides in the apical cell membrane. In terms of biological role, plays a critical role in epithelial cell morphogenesis, polarity, adhesion and cytoskeletal organization in the lens. This chain is Signal-induced proliferation-associated 1-like protein 3 (SIPA1L3), found in Homo sapiens (Human).